A 73-amino-acid chain; its full sequence is Translational regulator CsrA (73 aa).

Belongs to the CsrA/RsmA family. Homodimer; the beta-strands of each monomer intercalate to form a hydrophobic core, while the alpha-helices form wings that extend away from the core.

The protein resides in the cytoplasm. Its function is as follows. A translational regulator that binds mRNA to regulate translation initiation and/or mRNA stability. Usually binds in the 5'-UTR at or near the Shine-Dalgarno sequence preventing ribosome-binding, thus repressing translation. Its main target seems to be the major flagellin gene, while its function is anatagonized by FliW. The sequence is that of Translational regulator CsrA from Clostridium acetobutylicum (strain ATCC 824 / DSM 792 / JCM 1419 / IAM 19013 / LMG 5710 / NBRC 13948 / NRRL B-527 / VKM B-1787 / 2291 / W).